The sequence spans 474 residues: Solute carrier family 49 member A3 (474 aa).

Positions 1–20 (MEGESAETEPLIQSSSAADR) are disordered. The next 12 helical transmembrane spans lie at 38–58 (WFILSVLCLLNCSNAMAWLTF), 69–89 (LCVSLPLVNWLSLVFVLAAVV), 105–126 (CSLIGSSWLNACGCVLRVCGVL), 134–154 (VFAVVMCGQTLCALAQPLVIF), 175–195 (LASMANTVGLLLANLLSPLIV), 201–221 (LFLLLLIYSIPAAVACLLATL), 258–278 (WILLLCFGSGIGIFTCFSTLL), 290–310 (GFAGVCGAVSIVCGVAGAFLL), 326–346 (ICMCLTSVSCSAFAVVSQLPA), 349–369 (VLLVLVCCCFGLFGYSVYPVG), 388–408 (LIFTSGQIQAALYLLLLQALA), and 428–448 (VPVLVMAGVCAISSCVFVVFF).

The protein belongs to the major facilitator superfamily.

The protein resides in the membrane. This chain is Solute carrier family 49 member A3 (slc49a3), found in Danio rerio (Zebrafish).